The sequence spans 367 residues: Centromere protein L (367 aa).

The protein belongs to the CENP-L/IML3 family.

It localises to the nucleus. Its subcellular location is the chromosome. The protein localises to the centromere. In terms of biological role, probable component of a centromeric complex involved in assembly of kinetochore proteins, mitotic progression and chromosome segregation. This chain is Centromere protein L (cenpl), found in Danio rerio (Zebrafish).